The primary structure comprises 301 residues: Hydroxymethylglutaryl-CoA lyase (301 aa).

Residues 4 to 271 (VKVFEVGPRD…STGVDLEAVA (268 aa)) form the Pyruvate carboxyltransferase domain. Arg-12 is a substrate binding site. Residues Asp-13, His-204, and His-206 each coordinate a divalent metal cation. Residue Cys-237 is part of the active site. Asn-246 serves as a coordination point for a divalent metal cation.

This sequence belongs to the HMG-CoA lyase family.

It catalyses the reaction (3S)-3-hydroxy-3-methylglutaryl-CoA = acetoacetate + acetyl-CoA. It participates in metabolic intermediate metabolism; (S)-3-hydroxy-3-methylglutaryl-CoA degradation; acetoacetate from (S)-3-hydroxy-3-methylglutaryl-CoA: step 1/1. Involved in the catabolism of branched amino acids such as leucine. The protein is Hydroxymethylglutaryl-CoA lyase (mvaB) of Pseudomonas mevalonii.